Here is a 418-residue protein sequence, read N- to C-terminus: CinA-like protein (418 aa).

It belongs to the CinA family.

This chain is CinA-like protein, found in Leptospira interrogans serogroup Icterohaemorrhagiae serovar Lai (strain 56601).